The primary structure comprises 481 residues: Delta(14)-sterol reductase ERG24B (481 aa).

The next 8 membrane-spanning stretches (helical) occupy residues 11–31 (FGGP…MQVL), 80–100 (LFAY…QIVL), 125–145 (LTGC…WTWI), 149–169 (YIQL…WTYL), 244–264 (TYGF…YYVL), 279–299 (ITSD…VPFL), 313–333 (HLGP…LYIF), and 427–447 (AAPW…FLLI).

The protein belongs to the ERG4/ERG24 family.

The protein localises to the endoplasmic reticulum membrane. The enzyme catalyses 4,4-dimethyl-5alpha-cholesta-8,24-dien-3beta-ol + NADP(+) = 4,4-dimethyl-5alpha-cholesta-8,14,24-trien-3beta-ol + NADPH + H(+). It functions in the pathway steroid metabolism; ergosterol biosynthesis. Its function is as follows. Delta(14)-sterol reductase; part of the third module of ergosterol biosynthesis pathway that includes the late steps of the pathway. Catalyzes the reduction of the C14=C15 double bond within 4,4,24-trimethyl ergosta-8,14,24(28)-trienolto produce 4,4-dimethylfecosterol. The third module or late pathway involves the ergosterol synthesis itself through consecutive reactions that mainly occur in the endoplasmic reticulum (ER) membrane. Firstly, the squalene synthase ERG9 catalyzes the condensation of 2 farnesyl pyrophosphate moieties to form squalene, which is the precursor of all steroids. Squalene synthase is crucial for balancing the incorporation of farnesyl diphosphate (FPP) into sterol and nonsterol isoprene synthesis. Secondly, squalene is converted into lanosterol by the consecutive action of the squalene epoxidase ERG1 and the lanosterol synthase ERG7. Then, the delta(24)-sterol C-methyltransferase ERG6 methylates lanosterol at C-24 to produce eburicol. Eburicol is the substrate of the sterol 14-alpha demethylase encoded by CYP51A, CYP51B and CYP51C, to yield 4,4,24-trimethyl ergosta-8,14,24(28)-trienol. CYP51B encodes the enzyme primarily responsible for sterol 14-alpha-demethylation, and plays an essential role in ascospore formation. CYP51A encodes an additional sterol 14-alpha-demethylase, induced on ergosterol depletion and responsible for the intrinsic variation in azole sensitivity. The third CYP51 isoform, CYP51C, does not encode a sterol 14-alpha-demethylase, but is required for full virulence on host wheat ears. The C-14 reductase ERG24 then reduces the C14=C15 double bond which leads to 4,4-dimethylfecosterol. A sequence of further demethylations at C-4, involving the C-4 demethylation complex containing the C-4 methylsterol oxidases ERG25, the sterol-4-alpha-carboxylate 3-dehydrogenase ERG26 and the 3-keto-steroid reductase ERG27, leads to the production of fecosterol via 4-methylfecosterol. ERG28 has a role as a scaffold to help anchor ERG25, ERG26 and ERG27 to the endoplasmic reticulum. The C-8 sterol isomerase ERG2 then catalyzes the reaction which results in unsaturation at C-7 in the B ring of sterols and thus converts fecosterol to episterol. The sterol-C5-desaturases ERG3A and ERG3BB then catalyze the introduction of a C-5 double bond in the B ring to produce 5-dehydroepisterol. The C-22 sterol desaturases ERG5A and ERG5B further convert 5-dehydroepisterol into ergosta-5,7,22,24(28)-tetraen-3beta-ol by forming the C-22(23) double bond in the sterol side chain. Finally, ergosta-5,7,22,24(28)-tetraen-3beta-ol is substrate of the C-24(28) sterol reductase ERG4 to produce ergosterol. This chain is Delta(14)-sterol reductase ERG24B, found in Gibberella zeae (strain ATCC MYA-4620 / CBS 123657 / FGSC 9075 / NRRL 31084 / PH-1) (Wheat head blight fungus).